The following is a 174-amino-acid chain: Caltractin ICL1e (174 aa).

The interval methionine 1–aspartate 33 is disordered. EF-hand domains are found at residues aspartate 33 to aspartate 68, isoleucine 88 to asparagine 103, glutamate 105 to threonine 140, and methionine 141 to phenylalanine 174.

It belongs to the centrin family. In terms of assembly, monomer.

It is found in the cytoplasm. The protein localises to the cytoskeleton. Its function is as follows. Plays a fundamental role in microtubule organizing center structure and function. Component of the infraciliary lattice (ICL) and the ciliary basal bodies. This chain is Caltractin ICL1e (Icl1e), found in Paramecium tetraurelia.